The sequence spans 616 residues: Centrosomal protein of 70 kDa (616 aa).

Coiled-coil stretches lie at residues 96–210 and 273–335; these read EETT…EEER and NYKG…NIKL. The TPR repeat unit spans residues 502-535; sequence NGVFPRMNEVYTRLGEMNNAVRNLQELLELDSSS.

In terms of assembly, directly interacts with tubulin-gamma; this interaction determines centrosomal localization.

It localises to the cytoplasm. Its subcellular location is the cytoskeleton. It is found in the microtubule organizing center. The protein localises to the centrosome. Plays a role in the organization of both preexisting and nascent microtubules in interphase cells. During mitosis, required for the organization and orientation of the mitotic spindle. The polypeptide is Centrosomal protein of 70 kDa (Cep70) (Mus musculus (Mouse)).